Consider the following 312-residue polypeptide: Ribosomal protein L11 methyltransferase (312 aa).

Thr-160, Gly-181, Asp-203, and Asn-246 together coordinate S-adenosyl-L-methionine.

This sequence belongs to the methyltransferase superfamily. PrmA family.

The protein localises to the cytoplasm. It carries out the reaction L-lysyl-[protein] + 3 S-adenosyl-L-methionine = N(6),N(6),N(6)-trimethyl-L-lysyl-[protein] + 3 S-adenosyl-L-homocysteine + 3 H(+). In terms of biological role, methylates ribosomal protein L11. The polypeptide is Ribosomal protein L11 methyltransferase (Staphylococcus saprophyticus subsp. saprophyticus (strain ATCC 15305 / DSM 20229 / NCIMB 8711 / NCTC 7292 / S-41)).